Reading from the N-terminus, the 333-residue chain is Ketol-acid reductoisomerase (NADP(+)) (333 aa).

One can recognise a KARI N-terminal Rossmann domain in the interval 2 to 182 (AKIYYDEDAS…GATRAGVIET (181 aa)). NADP(+)-binding positions include 25–28 (YGSQ), S51, S53, and 83–86 (DTVQ). Residue H108 is part of the active site. G134 contributes to the NADP(+) binding site. In terms of domain architecture, KARI C-terminal knotted spans 183–327 (TFKEETETDL…EELRKMMPWL (145 aa)). The Mg(2+) site is built by D191, E195, E227, and E231. A substrate-binding site is contributed by S252.

This sequence belongs to the ketol-acid reductoisomerase family. Mg(2+) is required as a cofactor.

It catalyses the reaction (2R)-2,3-dihydroxy-3-methylbutanoate + NADP(+) = (2S)-2-acetolactate + NADPH + H(+). It carries out the reaction (2R,3R)-2,3-dihydroxy-3-methylpentanoate + NADP(+) = (S)-2-ethyl-2-hydroxy-3-oxobutanoate + NADPH + H(+). It functions in the pathway amino-acid biosynthesis; L-isoleucine biosynthesis; L-isoleucine from 2-oxobutanoate: step 2/4. The protein operates within amino-acid biosynthesis; L-valine biosynthesis; L-valine from pyruvate: step 2/4. Its function is as follows. Involved in the biosynthesis of branched-chain amino acids (BCAA). Catalyzes an alkyl-migration followed by a ketol-acid reduction of (S)-2-acetolactate (S2AL) to yield (R)-2,3-dihydroxy-isovalerate. In the isomerase reaction, S2AL is rearranged via a Mg-dependent methyl migration to produce 3-hydroxy-3-methyl-2-ketobutyrate (HMKB). In the reductase reaction, this 2-ketoacid undergoes a metal-dependent reduction by NADPH to yield (R)-2,3-dihydroxy-isovalerate. This is Ketol-acid reductoisomerase (NADP(+)) from Aquifex aeolicus (strain VF5).